We begin with the raw amino-acid sequence, 1129 residues long: Translation initiation factor IF-2 (1129 aa).

2 stretches are compositionally biased toward low complexity: residues 33 to 42 (AARSHSSSIS) and 56 to 99 (GGSP…AAKP). Disordered regions lie at residues 33 to 462 (AARS…IGEN) and 485 to 515 (SLARPSKPRTKHKPAPKPVAAIRKRRKETAR). Pro residues predominate over residues 100-112 (SPKPSAPSRPEAP). Residues 135–147 (STPAAAAPAAAPS) show a composition bias toward low complexity. The segment covering 148–161 (APAPSAPTPRPKPT) has biased composition (pro residues). A compositionally biased stretch (low complexity) spans 162-175 (APKASAPAPTASAP). 2 stretches are compositionally biased toward pro residues: residues 176–191 (SAPPRPTSARPTPAPA) and 211–221 (PTAPPTRPQPK). Over residues 257–273 (GQRPGVSPRPSGPPGQR) the composition is skewed to low complexity. Positions 431-445 (GRPDWDDSAKLEALR) are enriched in basic and acidic residues. 2 stretches are compositionally biased toward basic residues: residues 490–499 (SKPRTKHKPA) and 506–515 (IRKRRKETAR). Positions 621 to 793 (RRPPVVTVMG…ILLVTEVEDL (173 aa)) constitute a tr-type G domain. Positions 630 to 637 (GHVDHGKT) are G1. Position 630-637 (630-637 (GHVDHGKT)) interacts with GTP. The segment at 655–659 (GITQH) is G2. Residues 680–683 (DTPG) are G3. GTP is bound by residues 680-684 (DTPGH) and 734-737 (NKID). The segment at 734–737 (NKID) is G4. A G5 region spans residues 770–772 (SAL).

The protein belongs to the TRAFAC class translation factor GTPase superfamily. Classic translation factor GTPase family. IF-2 subfamily.

It is found in the cytoplasm. Functionally, one of the essential components for the initiation of protein synthesis. Protects formylmethionyl-tRNA from spontaneous hydrolysis and promotes its binding to the 30S ribosomal subunits. Also involved in the hydrolysis of GTP during the formation of the 70S ribosomal complex. The polypeptide is Translation initiation factor IF-2 (Synechococcus sp. (strain CC9311)).